The sequence spans 630 residues: Differentially expressed in FDCP 6 (630 aa).

Tyr-210 is modified (phosphotyrosine). One can recognise a PH domain in the interval 216 to 312 (DVLKQGYLWK…WTAAIQTAIR (97 aa)). Lys-225 is modified (N6-acetyllysine). Disordered regions lie at residues 318–341 (KTSL…RRRA), 378–418 (LQEE…ELKK), and 552–630 (HPIE…APGN). Composition is skewed to basic and acidic residues over residues 331 to 341 (EQREQRERRRA) and 378 to 392 (LQEE…HKEL). Positions 588-606 (WGSQGNRTLSVNSSEQKSL) are enriched in polar residues. Ser-590 is modified (phosphoserine). Residues 620 to 630 (QEEKLDPAPGN) are compositionally biased toward basic and acidic residues.

As to quaternary structure, interacts with IRF4, activated RAC1 and F-actin. Both the phosphorylated and non-phosphorylated forms bind phosphatidylinositol 3,4,5-trisphosphate (PtdInsP3). Interacts with ZAP70. Interacts with RAB11A. In terms of processing, tyrosine-phosphorylated by tyrosine-protein kinase LCK in response to T-cell activation. In terms of tissue distribution, thymus.

It is found in the cytoplasm. The protein resides in the cell membrane. Its subcellular location is the nucleus. The protein localises to the cytoskeleton. It localises to the perinuclear region. It is found in the cell projection. The protein resides in the filopodium. Phosphatidylinositol 3,4,5-trisphosphate-dependent guanine nucleotide exchange factor (GEF) which plays a role in the activation of Rho GTPases RAC1, RhoA and CDC42. Can regulate cell morphology in cooperation with activated RAC1. Involved in immune homeostasis by ensuring proper trafficking and availability of T-cell regulator CTLA-4 at T-cell surface. Plays a role in Th2 (T helper cells) development and/or activation, perhaps by interfering with ZAP70 signaling. Required for optimal T-cell effector function, lymphocyte homeostasis and the prevention of systemic autoimmunity. This is Differentially expressed in FDCP 6 (Def6) from Mus musculus (Mouse).